The following is a 236-amino-acid chain: Probable transcriptional regulatory protein UU295 (236 aa).

This sequence belongs to the TACO1 family.

Its subcellular location is the cytoplasm. This is Probable transcriptional regulatory protein UU295 from Ureaplasma parvum serovar 3 (strain ATCC 700970).